A 215-amino-acid chain; its full sequence is Large ribosomal subunit protein uL4 (215 aa).

A disordered region spans residues 43–100; that stretch reads AAKRQGTHSTKTRGEVSGGGKKPYRQKGSGRARQGSTRAPQFTGGGTVHGPKPRDYSQ.

It belongs to the universal ribosomal protein uL4 family. In terms of assembly, part of the 50S ribosomal subunit.

Its function is as follows. One of the primary rRNA binding proteins, this protein initially binds near the 5'-end of the 23S rRNA. It is important during the early stages of 50S assembly. It makes multiple contacts with different domains of the 23S rRNA in the assembled 50S subunit and ribosome. Functionally, forms part of the polypeptide exit tunnel. The protein is Large ribosomal subunit protein uL4 of Mycolicibacterium smegmatis (Mycobacterium smegmatis).